The sequence spans 257 residues: Trans-aconitate 2-methyltransferase (257 aa).

The protein belongs to the methyltransferase superfamily. Tam family.

The protein localises to the cytoplasm. The catalysed reaction is trans-aconitate + S-adenosyl-L-methionine = (E)-3-(methoxycarbonyl)pent-2-enedioate + S-adenosyl-L-homocysteine. Functionally, catalyzes the S-adenosylmethionine monomethyl esterification of trans-aconitate. This is Trans-aconitate 2-methyltransferase from Rhizobium meliloti (strain 1021) (Ensifer meliloti).